The primary structure comprises 351 residues: Palmitoyltransferase spe-10 (351 aa).

4 helical membrane passes run 21–43, 60–80, 198–218, and 241–261; these read TGWI…LWWS, IQAT…MWSL, YFLL…LTSL, and LFSF…LIIF. A DHHC domain is found at 154–204; it reads KYCYECGHIKPDRARHCSSCGKCCIKYDHHCPWINMCVTHVNYKYFLLYII.

The protein belongs to the DHHC palmitoyltransferase family. Expressed during spermatogenesis in budding and budded spermatids.

The protein resides in the membrane. The enzyme catalyses L-cysteinyl-[protein] + hexadecanoyl-CoA = S-hexadecanoyl-L-cysteinyl-[protein] + CoA. Functionally, involved in spermatogenesis, specifically in the morphogenesis of fibrous body-membranous organelles (FB-MO), which are Golgi-derived organelles used for transporting sperm-specific components, in spermatocytes and in their localization into budding spermatids. Required for the proper formation of spermatids and spermatozoa. This chain is Palmitoyltransferase spe-10, found in Caenorhabditis elegans.